The primary structure comprises 501 residues: Aldehyde dehydrogenase 1A1 (501 aa).

Ser2 bears the N-acetylserine mark. Residues Lys91 and Lys128 each carry the N6-acetyllysine modification. NAD(+) is bound by residues Ile167 to Asn170, Lys193 to Glu196, Gly226 to Pro227, and Gly246 to Ser247. Lys252 carries the post-translational modification N6-acetyllysine. The Proton acceptor role is filled by Glu269. An NAD(+)-binding site is contributed by Glu269–Gly271. Cys303 (nucleophile) is an active-site residue. The tract at residues Leu336 to Ser501 is mediates interaction with PRMT3. Thr337 carries the phosphothreonine modification. Position 349–353 (Glu349–Lys353) interacts with NAD(+). An N6-acetyllysine mark is found at Lys353 and Lys367. Position 400–402 (Glu400–Phe402) interacts with NAD(+). Lys410 carries the N6-acetyllysine modification. Position 413 is a phosphoserine (Ser413). N6-acetyllysine occurs at positions 419, 435, and 495.

Belongs to the aldehyde dehydrogenase family. In terms of assembly, homotetramer. Interacts with PRMT3; the interaction is direct, inhibits ALDH1A1 aldehyde dehydrogenase activity and is independent of the methyltransferase activity of PRMT3. Post-translationally, the N-terminus is blocked most probably by acetylation. Strongly expressed in kidney, lung, testis, intestine, stomach, and trachea, but weakly in the liver.

The protein resides in the cytoplasm. The protein localises to the cytosol. It is found in the cell projection. It localises to the axon. It carries out the reaction an aldehyde + NAD(+) + H2O = a carboxylate + NADH + 2 H(+). The catalysed reaction is all-trans-retinal + NAD(+) + H2O = all-trans-retinoate + NADH + 2 H(+). The enzyme catalyses 9-cis-retinal + NAD(+) + H2O = 9-cis-retinoate + NADH + 2 H(+). It catalyses the reaction 11-cis-retinal + NAD(+) + H2O = 11-cis-retinoate + NADH + 2 H(+). It carries out the reaction 13-cis-retinal + NAD(+) + H2O = 13-cis-retinoate + NADH + 2 H(+). The catalysed reaction is 3-deoxyglucosone + NAD(+) + H2O = 2-dehydro-3-deoxy-D-gluconate + NADH + 2 H(+). The enzyme catalyses (E)-4-hydroxynon-2-enal + NAD(+) + H2O = (E)-4-hydroxynon-2-enoate + NADH + 2 H(+). It catalyses the reaction malonaldehyde + NAD(+) + H2O = 3-oxopropanoate + NADH + 2 H(+). It carries out the reaction hexanal + NAD(+) + H2O = hexanoate + NADH + 2 H(+). The catalysed reaction is propanal + NAD(+) + H2O = propanoate + NADH + 2 H(+). The enzyme catalyses acetaldehyde + NAD(+) + H2O = acetate + NADH + 2 H(+). It catalyses the reaction benzaldehyde + NAD(+) + H2O = benzoate + NADH + 2 H(+). It carries out the reaction 4-aminobutanal + NAD(+) + H2O = 4-aminobutanoate + NADH + 2 H(+). It participates in cofactor metabolism; retinol metabolism. With respect to regulation, inhibited by chloral hydrate. In terms of biological role, cytosolic dehydrogenase that catalyzes the irreversible oxidation of a wide range of aldehydes to their corresponding carboxylic acid. Functions downstream of retinol dehydrogenases and catalyzes the oxidation of retinaldehyde into retinoic acid, the second step in the oxidation of retinol/vitamin A into retinoic acid. This pathway is crucial to control the levels of retinol and retinoic acid, two important molecules which excess can be teratogenic and cytotoxic. Also oxidizes aldehydes resulting from lipid peroxidation like (E)-4-hydroxynon-2-enal/HNE, malonaldehyde and hexanal that form protein adducts and are highly cytotoxic. By participating for instance to the clearance of (E)-4-hydroxynon-2-enal/HNE in the lens epithelium prevents the formation of HNE-protein adducts and lens opacification. Functions also downstream of fructosamine-3-kinase in the fructosamine degradation pathway by catalyzing the oxidation of 3-deoxyglucosone, the carbohydrate product of fructosamine 3-phosphate decomposition, which is itself a potent glycating agent that may react with lysine and arginine side-chains of proteins. Also has an aminobutyraldehyde dehydrogenase activity and is probably part of an alternative pathway for the biosynthesis of GABA/4-aminobutanoate in midbrain, thereby playing a role in GABAergic synaptic transmission. The sequence is that of Aldehyde dehydrogenase 1A1 from Rattus norvegicus (Rat).